Reading from the N-terminus, the 73-residue chain is Disintegrin trigramin-gamma (73 aa).

The Disintegrin domain maps to 1 to 73 (EAGEDCDCGS…AGCPRNPLHA (73 aa)). 6 disulfides stabilise this stretch: cysteine 6/cysteine 21, cysteine 8/cysteine 16, cysteine 15/cysteine 38, cysteine 29/cysteine 35, cysteine 34/cysteine 59, and cysteine 47/cysteine 66. A Cell attachment site motif is present at residues 51-53 (RGD).

The protein belongs to the venom metalloproteinase (M12B) family. P-II subfamily. P-IIa sub-subfamily. As to quaternary structure, monomer (disintegrin). Expressed by the venom gland.

The protein localises to the secreted. Functionally, inhibits fibrinogen interaction with platelets. Acts by binding to alpha-IIb/beta-3 (ITGA2B/ITGB3) on the platelet surface and inhibits aggregation induced by ADP, thrombin, platelet-activating factor and collagen. This Craspedocephalus gramineus (Bamboo pit viper) protein is Disintegrin trigramin-gamma.